The primary structure comprises 650 residues: MTEFLRFPIKLTFALVAALMIGFHLNLETPRWAVMTAGIVAGGTAFAAGGDPYSGALRYRGILRIIGTFIGCVAALVIMIATVRAPVVMLLLCCIWAGFCVWLSSLIKVENSYALGLAGYTALIIVVTANASGGLTLVPQYAVERCSEIILGILCAILADMIFSPRSIKKVIDAEVDSLLVAHYRLLQLCVAHEDKEEVDKAWGALVRRTTALSSMRSQLMMESSRWQNTSRRLQMLNTLSLTMITQAAETFLIQNSRPDYIATQYRVLMEKEAATAEDVHKRMKALRRLIAVSSKTVPETLESWVEAATEYQLLTHGIKSNGRITALEEGILQREVVIQARSAENHHAMINGVRTFVATALGSLFWLYTGWTSGSGCMVMLGVITALAMRMPNPLMMAKDFVYGMTVAVPLGALYFMYILPNTQQSAVLLCIAIGLLGFISGILIQRRQIGTLGAMVGTINVLVLDNPMQFNFTQFIDNALGQWIGSFVALMVILLIRDKSKARTGRKLLNRFMYAAVSAMTTNQARRRENHLPALYQQLFLLLNLFPGDIDKYRIALTLIIGHQRLRAADVPVNADLSAYHRQLRHTADRIISVRSDEKRRYYFERLLKELDVYQHKLAHYDAPTSVTEPVTRLAEMLKKYQNTLVQI.

Helical transmembrane passes span 7-27, 32-52, 61-81, 87-107, 115-135, 148-168, 365-385, 402-422, 426-446, 450-470, and 478-498; these read FPIKLTFALVAALMIGFHLNL, WAVMTAGIVAGGTAFAAGGDP, GILRIIGTFIGCVAALVIMIA, VVMLLLCCIWAGFCVWLSSLI, LGLAGYTALIIVVTANASGGL, EIILGILCAILADMIFSPRSI, LFWLYTGWTSGSGCMVMLGVI, FVYGMTVAVPLGALYFMYILP, QSAVLLCIAIGLLGFISGILI, QIGTLGAMVGTINVLVLDNPM, and IDNALGQWIGSFVALMVILLI.

This sequence belongs to the aromatic acid exporter ArAE (TC 2.A.85) family.

It is found in the cell inner membrane. Its function is as follows. Forms an efflux pump with AaeA. Could function as a metabolic relief valve, allowing to eliminate certain compounds when they accumulate to high levels in the cell. The polypeptide is p-hydroxybenzoic acid efflux pump subunit AaeB (Pantoea ananatis (strain LMG 20103)).